Here is an 80-residue protein sequence, read N- to C-terminus: Exodeoxyribonuclease 7 small subunit (80 aa).

Belongs to the XseB family. Heterooligomer composed of large and small subunits.

Its subcellular location is the cytoplasm. The enzyme catalyses Exonucleolytic cleavage in either 5'- to 3'- or 3'- to 5'-direction to yield nucleoside 5'-phosphates.. Its function is as follows. Bidirectionally degrades single-stranded DNA into large acid-insoluble oligonucleotides, which are then degraded further into small acid-soluble oligonucleotides. The chain is Exodeoxyribonuclease 7 small subunit from Rickettsia africae (strain ESF-5).